The chain runs to 103 residues: Phosphoribosyl-ATP pyrophosphatase (103 aa).

Belongs to the PRA-PH family.

The protein localises to the cytoplasm. It catalyses the reaction 1-(5-phospho-beta-D-ribosyl)-ATP + H2O = 1-(5-phospho-beta-D-ribosyl)-5'-AMP + diphosphate + H(+). It participates in amino-acid biosynthesis; L-histidine biosynthesis; L-histidine from 5-phospho-alpha-D-ribose 1-diphosphate: step 2/9. This chain is Phosphoribosyl-ATP pyrophosphatase (hisE), found in Cereibacter sphaeroides (strain ATCC 17023 / DSM 158 / JCM 6121 / CCUG 31486 / LMG 2827 / NBRC 12203 / NCIMB 8253 / ATH 2.4.1.) (Rhodobacter sphaeroides).